Here is a 152-residue protein sequence, read N- to C-terminus: Siroheme decarboxylase beta subunit (152 aa).

Belongs to the Ahb/Nir family. In terms of assembly, forms a heterodimer composed of AhbA and AhbB.

The enzyme catalyses siroheme + 2 H(+) = 12,18-didecarboxysiroheme + 2 CO2. It participates in porphyrin-containing compound metabolism; protoheme biosynthesis. Binds heme b. The redox state of the heme b modulates the activity of the enzyme. Activity is stimulated by sodium dithionite. Its function is as follows. Involved in siroheme-dependent heme b biosynthesis. Catalyzes the decarboxylation of siroheme into didecarboxysiroheme. In Methanosarcina barkeri (strain Fusaro / DSM 804), this protein is Siroheme decarboxylase beta subunit.